We begin with the raw amino-acid sequence, 277 residues long: F420-dependent methylenetetrahydromethanopterin dehydrogenase (277 aa).

It belongs to the MTD family.

The catalysed reaction is 5,10-methylenetetrahydromethanopterin + oxidized coenzyme F420-(gamma-L-Glu)(n) + 2 H(+) = 5,10-methenyl-5,6,7,8-tetrahydromethanopterin + reduced coenzyme F420-(gamma-L-Glu)(n). It participates in one-carbon metabolism; methanogenesis from CO(2); 5,10-methylene-5,6,7,8-tetrahydromethanopterin from 5,10-methenyl-5,6,7,8-tetrahydromethanopterin (coenzyme F420 route): step 1/1. In terms of biological role, catalyzes the reversible reduction of methenyl-H(4)MPT(+) to methylene-H(4)MPT. In Methanococcus maripaludis (strain C5 / ATCC BAA-1333), this protein is F420-dependent methylenetetrahydromethanopterin dehydrogenase.